We begin with the raw amino-acid sequence, 246 residues long: Proteasome subunit alpha type-5 (246 aa).

Belongs to the peptidase T1A family. The 26S proteasome consists of a 20S proteasome core and two 19S regulatory subunits. The 20S proteasome core is composed of 28 subunits that are arranged in four stacked rings, resulting in a barrel-shaped structure. The two end rings are each formed by seven alpha subunits, and the two central rings are each formed by seven beta subunits. The catalytic chamber with the active sites is on the inside of the barrel.

Its subcellular location is the cytoplasm. It localises to the nucleus. Functionally, the proteasome is a multicatalytic proteinase complex which is characterized by its ability to cleave peptides with Arg, Phe, Tyr, Leu, and Glu adjacent to the leaving group at neutral or slightly basic pH. The proteasome has an ATP-dependent proteolytic activity. In Trypanosoma brucei brucei, this protein is Proteasome subunit alpha type-5.